Here is a 379-residue protein sequence, read N- to C-terminus: Methionine aminopeptidase 1 (379 aa).

A C6H2-type zinc finger spans residues 7–60 (KHICCGIDCNNEADRLQCPKCLNDGVKSYFCGQECFRNSWNIHKHLHRPPNVEK). Zn(2+)-binding residues include C10, C15, C24, C27, C37, C41, H49, and H53. H192 is an a protein binding site. Zn(2+) is bound by residues D209, D220, and H289. H296 provides a ligand contact to a protein. Residues E322 and E353 each coordinate Zn(2+). S373 carries the post-translational modification Phosphoserine.

This sequence belongs to the peptidase M24A family. Methionine aminopeptidase type 1 subfamily. Associates with the 60S ribosomal subunit of the 80S translational complex. Requires Zn(2+) as cofactor. It depends on Co(2+) as a cofactor. Mn(2+) is required as a cofactor. The cofactor is Fe(2+).

The protein resides in the cytoplasm. It is found in the nucleus. It localises to the nucleolus. The enzyme catalyses Release of N-terminal amino acids, preferentially methionine, from peptides and arylamides.. Its function is as follows. Cotranslationally removes the N-terminal methionine from nascent proteins. The N-terminal methionine is often cleaved when the second residue in the primary sequence is small and uncharged (Met-Ala-, Cys, Gly, Pro, Ser, Thr, or Val). This Schizosaccharomyces pombe (strain 972 / ATCC 24843) (Fission yeast) protein is Methionine aminopeptidase 1 (fma1).